The primary structure comprises 711 residues: Ferric reductase transmembrane component 3 (711 aa).

Residues 1 to 20 (MYWVLLCGSILLCCLSGASA) form the signal peptide. Over 21–166 (SPAKTKMYGK…YANYDIGHTY (146 aa)) the chain is Extracellular. Residues Asn85, Asn108, Asn120, and Asn134 are each glycosylated (N-linked (GlcNAc...) asparagine). A helical transmembrane segment spans residues 167–187 (GGIICAYFVGVMILASILHYL). Residues 188-237 (SYTPFKTALFKQRLVRYVRRYLTIPTIWGKHASSFSYLKIFTGFLPTRSE) are Cytoplasmic-facing. The chain crosses the membrane as a helical span at residues 238–258 (GVIILGYLVLHTVFLAYGYQY). Topologically, residues 259–280 (DPYNLIFDSRREQIARYVADRS) are extracellular. The 135-residue stretch at 280–414 (SGVLAFAHFP…SGIEWIYAAI (135 aa)) folds into the Ferric oxidoreductase domain. Residues 281–301 (GVLAFAHFPLIALFAGRNNFL) traverse the membrane as a helical segment. The Cytoplasmic portion of the chain corresponds to 302 to 321 (EFISGVKYTSFIMFHKWLGR). Positions 316 and 330 each coordinate heme. The chain crosses the membrane as a helical span at residues 322-341 (MMFLDAVIHGAAYTSYSVFY). Over 342-353 (KDWAASKEETYW) the chain is Extracellular. Residues 354-374 (QFGVAALCIVGVMVFFSLAMF) traverse the membrane as a helical segment. At 375 to 376 (RK) the chain is on the cytoplasmic side. A helical transmembrane segment spans residues 377–397 (FFYEAFLFLHIVLGALFFYTC). His386 is a heme binding site. Residue Trp398 is a topological domain, extracellular. Residues 399–419 (EHVVELSGIEWIYAAIAIWTI) form a helical membrane-spanning segment. His400 serves as a coordination point for heme. The FAD-binding FR-type domain occupies 415-534 (AIWTIDRLIR…EGPYGSSSPV (120 aa)). Residues 420-711 (DRLIRIVRVS…IEYFEEYQSW (292 aa)) are Cytoplasmic-facing. FAD is bound at residue 479–485 (HPFTVLD). NADP(+)-binding positions include 526–529 (GPYG) and 677–678 (CG).

The protein belongs to the ferric reductase (FRE) family. Requires FAD as cofactor. It depends on heme as a cofactor.

It localises to the cell membrane. It catalyses the reaction 2 a Fe(II)-siderophore + NADP(+) + H(+) = 2 a Fe(III)-siderophore + NADPH. Siderophore-iron reductase responsible for reducing extracellular iron prior to import. Catalyzes the reductive uptake of Fe(3+) bound to di- and trihydroxamate siderophores. Fe(3+) is reduced to Fe(2+), which then dissociates from the siderophore and can be imported by the high-affinity Fe(2+) transport complex in the plasma membrane. The chain is Ferric reductase transmembrane component 3 (FRE3) from Saccharomyces cerevisiae (strain ATCC 204508 / S288c) (Baker's yeast).